Here is a 349-residue protein sequence, read N- to C-terminus: Hydroxymethylglutaryl-CoA synthase (349 aa).

Residues aspartate 29 and alanine 30 each contribute to the (3S)-3-hydroxy-3-methylglutaryl-CoA site. Glutamate 81 acts as the Proton donor/acceptor in catalysis. (3S)-3-hydroxy-3-methylglutaryl-CoA contacts are provided by cysteine 113 and threonine 154. Cysteine 113 functions as the Acyl-thioester intermediate in the catalytic mechanism. CoA is bound at residue arginine 202. The (3S)-3-hydroxy-3-methylglutaryl-CoA site is built by threonine 204 and histidine 237. The active-site Proton donor/acceptor is histidine 237. Lysine 242 serves as a coordination point for CoA. The (3S)-3-hydroxy-3-methylglutaryl-CoA site is built by arginine 246, asparagine 269, and serine 299.

The protein belongs to the thiolase-like superfamily. Archaeal HMG-CoA synthase family. In terms of assembly, interacts with acetoacetyl-CoA thiolase that catalyzes the precedent step in the pathway and with a DUF35 protein. The acetoacetyl-CoA thiolase/HMG-CoA synthase complex channels the intermediate via a fused CoA-binding site, which allows for efficient coupling of the endergonic thiolase reaction with the exergonic HMGCS reaction.

The catalysed reaction is acetoacetyl-CoA + acetyl-CoA + H2O = (3S)-3-hydroxy-3-methylglutaryl-CoA + CoA + H(+). It functions in the pathway metabolic intermediate biosynthesis; (R)-mevalonate biosynthesis; (R)-mevalonate from acetyl-CoA: step 2/3. Functionally, catalyzes the condensation of acetyl-CoA with acetoacetyl-CoA to form 3-hydroxy-3-methylglutaryl-CoA (HMG-CoA). Functions in the mevalonate (MVA) pathway leading to isopentenyl diphosphate (IPP), a key precursor for the biosynthesis of isoprenoid compounds that are building blocks of archaeal membrane lipids. The polypeptide is Hydroxymethylglutaryl-CoA synthase (Methanococcoides burtonii (strain DSM 6242 / NBRC 107633 / OCM 468 / ACE-M)).